The sequence spans 1114 residues: Extracellular sulfatase SULF-1 homolog (1114 aa).

The signal sequence occupies residues 1–25 (MMRHSSLRLIIGGLILLLFVLNVFS). Positions 62, 63, and 98 each coordinate Ca(2+). Cys98 serves as the catalytic Nucleophile. Cys98 is modified (3-oxoalanine (Cys)). Residues Asn122, Asn159, Asn181, Asn208, and Asn251 are each glycosylated (N-linked (GlcNAc...) asparagine). Asp327 and His328 together coordinate Ca(2+). Asn447 carries an N-linked (GlcNAc...) asparagine glycan. The span at 466 to 479 (SSSSTAATLMSSTA) shows a compositional bias: low complexity. Positions 466-504 (SSSSTAATLMSSTAQQPEDGEEEVETDNEEDDVDGDGAM) are disordered. Residues 483-502 (EDGEEEVETDNEEDDVDGDG) are compositionally biased toward acidic residues. Residues Asn683, Asn713, and Asn743 are each glycosylated (N-linked (GlcNAc...) asparagine). The segment at 781-812 (KQLRESNKQALAAGRRNDNRRRNDQSVLDSGA) is disordered. The segment covering 795 to 804 (RRNDNRRRND) has biased composition (basic and acidic residues). N-linked (GlcNAc...) asparagine glycosylation occurs at Asn817. Residues 876–895 (ADSKEMAREARRKLKEERQR) are compositionally biased toward basic and acidic residues. The interval 876–901 (ADSKEMAREARRKLKEERQRKKERKR) is disordered. N-linked (GlcNAc...) asparagine glycans are attached at residues Asn945, Asn955, and Asn974. The interval 1073–1114 (LSKYNRLTGSQQSHMKRRPWKQTPLQQSPRFLRTHSVTPAQA) is disordered. Over residues 1095–1114 (TPLQQSPRFLRTHSVTPAQA) the composition is skewed to polar residues.

It belongs to the sulfatase family. It depends on Ca(2+) as a cofactor. Post-translationally, the conversion to 3-oxoalanine (also known as C-formylglycine, FGly), of a serine or cysteine residue in prokaryotes and of a cysteine residue in eukaryotes, is critical for catalytic activity.

The protein resides in the endoplasmic reticulum. The protein localises to the golgi apparatus. It localises to the golgi stack. It is found in the cell surface. The sequence is that of Extracellular sulfatase SULF-1 homolog (Sulf1) from Drosophila melanogaster (Fruit fly).